Consider the following 114-residue polypeptide: Probable 4-amino-4-deoxy-L-arabinose-phosphoundecaprenol flippase subunit ArnE (114 aa).

3 helical membrane passes run 41 to 61 (PWLIASVAALGCGMLLWIYLL), 64 to 84 (LPLSMAYPMLSINLVLVLVGS), and 94 to 114 (YHNWLGVGAIIVGALLLGGLL). Residues 43–112 (LIASVAALGC…IIVGALLLGG (70 aa)) enclose the EamA domain.

It belongs to the ArnE family. Heterodimer of ArnE and ArnF.

It is found in the cell inner membrane. It functions in the pathway bacterial outer membrane biogenesis; lipopolysaccharide biosynthesis. In terms of biological role, translocates 4-amino-4-deoxy-L-arabinose-phosphoundecaprenol (alpha-L-Ara4N-phosphoundecaprenol) from the cytoplasmic to the periplasmic side of the inner membrane. This is Probable 4-amino-4-deoxy-L-arabinose-phosphoundecaprenol flippase subunit ArnE from Aeromonas hydrophila subsp. hydrophila (strain ATCC 7966 / DSM 30187 / BCRC 13018 / CCUG 14551 / JCM 1027 / KCTC 2358 / NCIMB 9240 / NCTC 8049).